The sequence spans 453 residues: Chromosomal replication initiator protein DnaA (453 aa).

Residues 1–71 are domain I, interacts with DnaA modulators; the sequence is MSEKEIWEKV…QAILFDVVGY (71 aa). The domain II stretch occupies residues 71-114; it reads YEVKPHFITTEELANYSNNETATPKETTKPSTETTEDNHVLGRE. The segment at 115-331 is domain III, AAA+ region; that stretch reads QFNAHNTFDT…GALTRLLAYS (217 aa). The ATP site is built by G159, G161, K162, and T163. The tract at residues 332–453 is domain IV, binds dsDNA; that stretch reads QLLGKPITTE…ENLEKEIRNV (122 aa).

This sequence belongs to the DnaA family. As to quaternary structure, oligomerizes as a right-handed, spiral filament on DNA at oriC.

The protein localises to the cytoplasm. Plays an essential role in the initiation and regulation of chromosomal replication. ATP-DnaA binds to the origin of replication (oriC) to initiate formation of the DNA replication initiation complex once per cell cycle. Binds the DnaA box (a 9 base pair repeat at the origin) and separates the double-stranded (ds)DNA. Forms a right-handed helical filament on oriC DNA; dsDNA binds to the exterior of the filament while single-stranded (ss)DNA is stabiized in the filament's interior. The ATP-DnaA-oriC complex binds and stabilizes one strand of the AT-rich DNA unwinding element (DUE), permitting loading of DNA polymerase. After initiation quickly degrades to an ADP-DnaA complex that is not apt for DNA replication. Binds acidic phospholipids. This is Chromosomal replication initiator protein DnaA from Staphylococcus aureus (strain Mu3 / ATCC 700698).